A 717-amino-acid polypeptide reads, in one-letter code: Transport/processing ATP-binding protein ComA (717 aa).

The Peptidase C39 domain maps to 11-138; the sequence is QVDQMDCGVA…EEWTGVTLFM (128 aa). Cys17 is an active-site residue. Helical transmembrane passes span 18-38, 166-186, 205-225, 237-257, 281-301, 306-326, and 397-417; these read GVASLAMVFGYYGSYYFLAHL, GLIANIVLATLLVTVINIVGS, LGIISIGLVIVYILQQILSYA, LSIDVILSYIKHVFHLPMSFF, STILSIFLDVSTVVIISLVLF, NLFFMTLLALPIYTVIIFAFM, and VAHLLLNVGILWMGAVLVMDG. Positions 168–450 constitute an ABC transmembrane type-1 domain; that stretch reads IANIVLATLL…IINLQTKLQT (283 aa). Residues 484–717 enclose the ABC transporter domain; that stretch reads MTFKQVHYKY…GGFYAHLVNS (234 aa). 517–524 lines the ATP pocket; sequence GISGSGKT.

Belongs to the ABC transporter superfamily. HlyB family.

The protein localises to the cell membrane. Its function is as follows. Required for induction of competence. Seems to transport the competence-stimulating peptide (CSP). The polypeptide is Transport/processing ATP-binding protein ComA (comA) (Streptococcus pneumoniae (strain ATCC BAA-255 / R6)).